Here is a 235-residue protein sequence, read N- to C-terminus: Uridylate kinase (235 aa).

9–12 contacts ATP; the sequence is KLSG. Glycine 51 lines the UMP pocket. 2 residues coordinate ATP: glycine 52 and arginine 56. UMP-binding positions include aspartate 71 and 132–139; that span reads TGNPYFTT. Positions 159, 165, and 168 each coordinate ATP.

The protein belongs to the UMP kinase family. As to quaternary structure, homohexamer.

The protein resides in the cytoplasm. It carries out the reaction UMP + ATP = UDP + ADP. Its pathway is pyrimidine metabolism; CTP biosynthesis via de novo pathway; UDP from UMP (UMPK route): step 1/1. With respect to regulation, inhibited by UTP. In terms of biological role, catalyzes the reversible phosphorylation of UMP to UDP. The sequence is that of Uridylate kinase from Flavobacterium psychrophilum (strain ATCC 49511 / DSM 21280 / CIP 103535 / JIP02/86).